The sequence spans 464 residues: Heterogeneous nuclear ribonucleoprotein K (464 aa).

Methionine 1 bears the N-acetylmethionine mark. A disordered region spans residues 1-37 (METEQPEETFPNTETNGEFGKRPAEDMEEEQAFKRSR). The interval 1 to 276 (METEQPEETF…GRGGRPMPPS (276 aa)) is necessary for interaction with DDX1. Positions 19 to 37 (FGKRPAEDMEEEQAFKRSR) are enriched in basic and acidic residues. Lysine 34 carries the post-translational modification N6-acetyllysine; alternate. Lysine 34 participates in a covalent cross-link: Glycyl lysine isopeptide (Lys-Gly) (interchain with G-Cter in SUMO1); alternate. Residue lysine 34 forms a Glycyl lysine isopeptide (Lys-Gly) (interchain with G-Cter in SUMO2); alternate linkage. Serine 36 bears the Phosphoserine mark. Threonine 39 bears the Phosphothreonine mark. One can recognise a KH 1 domain in the interval 42–104 (MVELRILLQS…ETIGEILKKI (63 aa)). Residues lysine 52 and lysine 60 each participate in a glycyl lysine isopeptide (Lys-Gly) (interchain with G-Cter in SUMO2) cross-link. 2 repeat units span residues 54–76 (AGAVIGKGGKNIKALRTDYNASV) and 59–62 (GKGG). A 2 X 22 AA approximate repeats region spans residues 54-421 (AGAVIGKGGK…QIRHESGASI (368 aa)). The interval 59–407 (GKGGKNIKAL…LAGSIIGKGG (349 aa)) is 5 X 4 AA repeats of G-X-G-G. 2 positions are modified to phosphoserine: serine 75 and serine 116. Residues 144-209 (DCELRLLIHQ…DRVVECIKII (66 aa)) enclose the KH 2 domain. Residue lysine 163 forms a Glycyl lysine isopeptide (Lys-Gly) (interchain with G-Cter in SUMO1); alternate linkage. Residue lysine 163 forms a Glycyl lysine isopeptide (Lys-Gly) (interchain with G-Cter in SUMO2); alternate linkage. Lysine 198 is subject to N6-acetyllysine. Residues 209 to 337 (ILDLISESPI…RPGDRYDGMV (129 aa)) form an interaction with ZIK1 region. Serine 214 and serine 216 each carry phosphoserine. Lysine 219 is covalently cross-linked (Glycyl lysine isopeptide (Lys-Gly) (interchain with G-Cter in SUMO2); alternate). At lysine 219 the chain carries N6-succinyllysine; alternate. The RNA-binding RGG-box stretch occupies residues 236–273 (YGGFTMMFDDRRGRPVGFPMRGRGGFDRMPPGRGGRPM). Repeat copies occupy residues 245-250 (DRRGRP), 257-260 (GRGG), and 267-270 (GRGG). The 2 X 6 AA approximate repeats stretch occupies residues 245–329 (DRRGRPVGFP…LMAYDRRGRP (85 aa)). The segment at 250–329 (PVGFPMRGRG…LMAYDRRGRP (80 aa)) is disordered. Over residues 252-266 (GFPMRGRGGFDRMPP) the composition is skewed to low complexity. A compositionally biased stretch (basic and acidic residues) spans 276–285 (SRRDYDDMSP). A Phosphoserine modification is found at serine 284. The stretch at 295–298 (GRGG) is one 3-4 repeat. An Omega-N-methylarginine modification is found at arginine 316. One copy of the 2-2 repeat lies at 324 to 329 (DRRGRP). The residue at position 377 (arginine 377) is an Omega-N-methylarginine. A Phosphoserine modification is found at serine 379. Position 380 is a phosphotyrosine (tyrosine 380). Residues 387–451 (IITTQVTIPK…DQIQNAQYLL (65 aa)) enclose the KH 3 domain. Repeat copies occupy residues 399–421 (AGSIIGKGGQRIKQIRHESGASI) and 404–407 (GKGG). Lysine 405 is modified (N6-acetyllysine; alternate). Lysine 405 is covalently cross-linked (Glycyl lysine isopeptide (Lys-Gly) (interchain with G-Cter in SUMO2); alternate). A Phosphoserine modification is found at serine 420. Lysine 422 is covalently cross-linked (Glycyl lysine isopeptide (Lys-Gly) (interchain with G-Cter in SUMO1); alternate). Lysine 422 participates in a covalent cross-link: Glycyl lysine isopeptide (Lys-Gly) (interchain with G-Cter in SUMO2); alternate. Lysine 422 is covalently cross-linked (Glycyl lysine isopeptide (Lys-Gly) (interchain with G-Cter in SUMO); alternate).

As to quaternary structure, identified in the spliceosome C complex. Interacts with ANKRD28, RBM42 and ZIK1. Interacts with DDX1. Interacts with MDM2; this interaction leads to ubiquitination and proteasomal degradation. Interacts with p53/TP53. Interacts with BRDT. Interacts with IVNS1ABP. Interacts with PPIA/CYPA. Part of a transcription inhibitory ribonucleoprotein complex composed at least of the circular RNA circZNF827, ZNF827 and HNRNPL. Post-translationally, sumoylated by CBX4. Sumoylation is increased upon DNA damage, such as that produced by doxorubicin, etoposide, UV light and camptothecin, due to enhanced CBX4 phosphorylation by HIPK2 under these conditions. Ubiquitinated by MDM2. Doxorubicin treatment does not affect monoubiquitination, but slightly decreases HNRNPK poly-ubiquitination. In terms of processing, O-glycosylated (O-GlcNAcylated), in a cell cycle-dependent manner.

The protein localises to the cytoplasm. The protein resides in the nucleus. Its subcellular location is the nucleoplasm. It localises to the cell projection. It is found in the podosome. In terms of biological role, one of the major pre-mRNA-binding proteins. Binds tenaciously to poly(C) sequences. Likely to play a role in the nuclear metabolism of hnRNAs, particularly for pre-mRNAs that contain cytidine-rich sequences. Can also bind poly(C) single-stranded DNA. Plays an important role in p53/TP53 response to DNA damage, acting at the level of both transcription activation and repression. When sumoylated, acts as a transcriptional coactivator of p53/TP53, playing a role in p21/CDKN1A and 14-3-3 sigma/SFN induction. As far as transcription repression is concerned, acts by interacting with long intergenic RNA p21 (lincRNA-p21), a non-coding RNA induced by p53/TP53. This interaction is necessary for the induction of apoptosis, but not cell cycle arrest. As part of a ribonucleoprotein complex composed at least of ZNF827, HNRNPL and the circular RNA circZNF827 that nucleates the complex on chromatin, may negatively regulate the transcription of genes involved in neuronal differentiation. The chain is Heterogeneous nuclear ribonucleoprotein K (HNRNPK) from Bos taurus (Bovine).